Reading from the N-terminus, the 475-residue chain is Glycogen synthase (475 aa).

Lysine 15 serves as a coordination point for ADP-alpha-D-glucose.

The protein belongs to the glycosyltransferase 1 family. Bacterial/plant glycogen synthase subfamily.

It catalyses the reaction [(1-&gt;4)-alpha-D-glucosyl](n) + ADP-alpha-D-glucose = [(1-&gt;4)-alpha-D-glucosyl](n+1) + ADP + H(+). Its pathway is glycan biosynthesis; glycogen biosynthesis. Synthesizes alpha-1,4-glucan chains using ADP-glucose. This chain is Glycogen synthase, found in Alkaliphilus metalliredigens (strain QYMF).